The primary structure comprises 181 residues: Adenylate kinase (181 aa).

10-15 (GAGKGT) contacts ATP. Positions 30-59 (STGDLFRANISQGTELGKQAQEYMDAGKLV) are NMP. AMP-binding positions include threonine 31, arginine 36, 57–59 (KLV), 85–88 (GFPR), and glutamine 92. Positions 126-132 (SRGRNDD) are LID. Arginine 127 serves as a coordination point for ATP. 2 residues coordinate AMP: arginine 129 and arginine 140. Glycine 166 contributes to the ATP binding site.

The protein belongs to the adenylate kinase family. Monomer.

It is found in the cytoplasm. The catalysed reaction is AMP + ATP = 2 ADP. It functions in the pathway purine metabolism; AMP biosynthesis via salvage pathway; AMP from ADP: step 1/1. Functionally, catalyzes the reversible transfer of the terminal phosphate group between ATP and AMP. Plays an important role in cellular energy homeostasis and in adenine nucleotide metabolism. The chain is Adenylate kinase from Corynebacterium urealyticum (strain ATCC 43042 / DSM 7109).